A 346-amino-acid chain; its full sequence is Holliday junction branch migration complex subunit RuvB (346 aa).

Polar residues predominate over residues 1–11; sequence MTEQRTIASSA. The interval 1–20 is disordered; it reads MTEQRTIASSATREDEAADA. A large ATPase domain (RuvB-L) region spans residues 1–183; that stretch reads MTEQRTIASS…FGIVQRLEFY (183 aa). ATP is bound by residues Ile-22, Arg-23, Gly-64, Lys-67, Thr-68, Thr-69, 130–132, Arg-173, Tyr-183, and Arg-220; that span reads EDF. Mg(2+) is bound at residue Thr-68. The small ATPAse domain (RuvB-S) stretch occupies residues 184–254; it reads SPQELTRIVI…VAQAAMQMLK (71 aa). Residues 257-346 are head domain (RuvB-H); the sequence is PEGFDELDRR…PAIGEPGDLF (90 aa). Residues Arg-293, Arg-312, and Arg-317 each contribute to the DNA site.

The protein belongs to the RuvB family. As to quaternary structure, homohexamer. Forms an RuvA(8)-RuvB(12)-Holliday junction (HJ) complex. HJ DNA is sandwiched between 2 RuvA tetramers; dsDNA enters through RuvA and exits via RuvB. An RuvB hexamer assembles on each DNA strand where it exits the tetramer. Each RuvB hexamer is contacted by two RuvA subunits (via domain III) on 2 adjacent RuvB subunits; this complex drives branch migration. In the full resolvosome a probable DNA-RuvA(4)-RuvB(12)-RuvC(2) complex forms which resolves the HJ.

The protein localises to the cytoplasm. It catalyses the reaction ATP + H2O = ADP + phosphate + H(+). Its function is as follows. The RuvA-RuvB-RuvC complex processes Holliday junction (HJ) DNA during genetic recombination and DNA repair, while the RuvA-RuvB complex plays an important role in the rescue of blocked DNA replication forks via replication fork reversal (RFR). RuvA specifically binds to HJ cruciform DNA, conferring on it an open structure. The RuvB hexamer acts as an ATP-dependent pump, pulling dsDNA into and through the RuvAB complex. RuvB forms 2 homohexamers on either side of HJ DNA bound by 1 or 2 RuvA tetramers; 4 subunits per hexamer contact DNA at a time. Coordinated motions by a converter formed by DNA-disengaged RuvB subunits stimulates ATP hydrolysis and nucleotide exchange. Immobilization of the converter enables RuvB to convert the ATP-contained energy into a lever motion, pulling 2 nucleotides of DNA out of the RuvA tetramer per ATP hydrolyzed, thus driving DNA branch migration. The RuvB motors rotate together with the DNA substrate, which together with the progressing nucleotide cycle form the mechanistic basis for DNA recombination by continuous HJ branch migration. Branch migration allows RuvC to scan DNA until it finds its consensus sequence, where it cleaves and resolves cruciform DNA. The polypeptide is Holliday junction branch migration complex subunit RuvB (Xanthomonas campestris pv. campestris (strain B100)).